We begin with the raw amino-acid sequence, 962 residues long: Thrombospondin-3a (962 aa).

The first 23 residues, 1–23, serve as a signal peptide directing secretion; it reads MEQMFVHIWVSLVVLMSVWSAQS. In terms of domain architecture, Laminin G-like spans 24 to 196; sequence DKKQDVPVID…MDTLKLALGG (173 aa). Residues 277-318 form the EGF-like 1 domain; the sequence is PRSRCQPNPCFKGVSCMETFEYPGYRCGPCPDGMTGNGTHCQ. Disulfide bonds link Cys281/Cys292, Cys286/Cys303, Cys306/Cys317, Cys323/Cys335, Cys329/Cys344, Cys347/Cys371, Cys377/Cys390, Cys384/Cys399, Cys402/Cys414, Cys420/Cys434, Cys428/Cys444, Cys446/Cys457, Cys473/Cys480, Cys485/Cys505, Cys521/Cys541, Cys544/Cys564, Cys580/Cys600, Cys603/Cys623, Cys641/Cys661, and Cys684/Cys704. Asn313 carries an N-linked (GlcNAc...) asparagine glycan. The 40-residue stretch at 319–358 folds into the EGF-like 2; calcium-binding domain; that stretch reads DIDECSEAQPCYTPGACVNTARGFTCESCPPGMWGPPLSG. The 40-residue stretch at 373–412 folds into the EGF-like 3; calcium-binding domain; sequence DIDECVDLANACTPNSVCINIIGSFRCGQCKTGYVGNQTA. Asn409 is a glycosylation site (N-linked (GlcNAc...) asparagine). The EGF-like 4 domain maps to 416-458; sequence PRKSCSSLSFNPCDANAHCVMQRNGDVSCACNVGWAGNGHTCG. 8 TSP type-3 repeats span residues 459–493, 494–529, 530–552, 553–588, 589–611, 612–649, 650–692, and 693–728; these read KDTD…NSGQ, EDAD…NKDQ, QNSD…NIDQ, KDTD…NPMQ, TDRD…NPMQ, TDVD…NSSQ, LDSD…NPNQ, and KDSD…EVTL. Residues 548-704 are disordered; the sequence is PNIDQKDTDS…SDSNGVGDVC (157 aa). A compositionally biased stretch (acidic residues) spans 557–570; the sequence is SNGEGDACDDDIDG. Positions 631 to 641 are enriched in basic and acidic residues; that stretch reads GDGHQDTRDNC. Asn646 carries N-linked (GlcNAc...) asparagine glycosylation. The span at 652 to 669 shows a compositional bias: acidic residues; it reads SDNDGIGDDCDEDDDNDG. The N-linked (GlcNAc...) asparagine glycan is linked to Asn710. Cys720 and Cys941 are disulfide-bonded. The TSP C-terminal domain occupies 732–946; sequence RAYQTVILDP…LRYRCNDTVP (215 aa). N-linked (GlcNAc...) asparagine glycosylation is present at Asn942.

This sequence belongs to the thrombospondin family. As to quaternary structure, oligomer; disulfide-linked.

In terms of biological role, adhesive glycoprotein that mediates cell-to-cell and cell-to-matrix interactions. Can bind to fibrinogen, fibronectin, laminin and type V collagen. The chain is Thrombospondin-3a (thbs3a) from Danio rerio (Zebrafish).